A 751-amino-acid chain; its full sequence is Polyribonucleotide nucleotidyltransferase (751 aa).

Mg(2+)-binding residues include Asp-528 and Asp-534. Residues 594–653 (PRVISVTVPVSKIGEVIGPKGKMINQIQEDTGTDISIEDDGTVYIGATDGPSAEAARSAI) enclose the KH domain. Residues 665 to 737 (GERYLGTVVK…DRGKLSLAPV (73 aa)) form the S1 motif domain.

The protein belongs to the polyribonucleotide nucleotidyltransferase family. Requires Mg(2+) as cofactor.

The protein localises to the cytoplasm. It catalyses the reaction RNA(n+1) + phosphate = RNA(n) + a ribonucleoside 5'-diphosphate. Involved in mRNA degradation. Catalyzes the phosphorolysis of single-stranded polyribonucleotides processively in the 3'- to 5'-direction. The chain is Polyribonucleotide nucleotidyltransferase from Kocuria rhizophila (strain ATCC 9341 / DSM 348 / NBRC 103217 / DC2201).